A 314-amino-acid chain; its full sequence is 2-oxo-3-(phosphooxy)propyl 3-oxoalkanoate synthase (314 aa).

It belongs to the AfsA family.

The catalysed reaction is a medium-chain 3-oxoacyl-[ACP] + dihydroxyacetone phosphate = a (4-alkanoyl-5-oxo-2,5-dihydrofuran-3-yl)methyl phosphate + holo-[ACP] + H2O. Functionally, involved of the biosynthesis of S.coelicolor butanolide 1 (SCB1), a gamma-butyrolactone that triggers antibiotic production. In Streptomyces coelicolor (strain ATCC BAA-471 / A3(2) / M145), this protein is 2-oxo-3-(phosphooxy)propyl 3-oxoalkanoate synthase.